Here is a 98-residue protein sequence, read N- to C-terminus: Carboxysome shell protein CsoS1C (98 aa).

A BMC domain is found at 8–93; that stretch reads ALGMIETRGL…VHSEVENILP (86 aa).

This sequence belongs to the bacterial microcompartments protein family. CsoS1 subfamily. In terms of assembly, homohexamer with a small central pore. Interacts with the N-terminus (residues 1-136) of RuBisCO (CbbL).

The protein resides in the carboxysome. Its function is as follows. One of shell proteins of the carboxysome, a polyhedral inclusion where RuBisCO (ribulose bisphosphate carboxylase, ccbL-ccbS) is sequestered. Assembles into hexamers which make sheets that form the facets of the polyhedral carboxysome. The shell probably limits the diffusion of CO(2) into and out of the carboxysome. There are estimated to be 2970 CsoS1A/CsoS1C proteins per carboxysome (the proteins differ by only 1 residue). Unlike beta-carboxysomes, alpha-carboxysomes (Cb) can form without cargo protein. CsoS2 is essential for Cb formation and is also capable of targeting foreign proteins to the Cb. The Cb shell assembles with the aid of CsoS2; CsoS1A, CsoS1B and CsoS1C form the majority of the shell while CsoS4A and CsoS4B form vertices. CsoS1D forms pseudohexamers that probably control metabolite flux into and out of the shell. The protein is Carboxysome shell protein CsoS1C of Halothiobacillus neapolitanus (strain ATCC 23641 / c2) (Thiobacillus neapolitanus).